The sequence spans 1494 residues: Methyl-CpG-binding domain protein 5 (1494 aa).

One can recognise an MBD domain in the interval 11-81; it reads DKEGGLPAIQ…KVFNFDPGAA (71 aa). Positions 57–68 are required for interaction with ASXL1/2/3; it reads DGTCKCGLECPL. 8 disordered regions span residues 123–152, 200–274, 329–350, 450–522, 594–641, 809–848, 1154–1173, and 1345–1375; these read LVLTSPGGGTNATPVVPSRAATPRSVRNKS, RQRL…TPLS, HHKPPQGPPPPPPPSCALQKKP, IGRI…KDIP, LAGN…QSGR, PNPPQSRISTSSTPVIPNSIVSSYNQTSSEAGGSGPSSSI, HDGRLRNSRGARLPKNLDHG, and VNGCVPSPSDAKSISSEDDLRNPDSPSSNEL. Residues 333–343 show a composition bias toward pro residues; sequence PQGPPPPPPPS. Composition is skewed to low complexity over residues 499 to 511 and 594 to 612; these read SPRPSMPSSPSTK and LAGNNSSSSSNSGAVAGSG. Polar residues-rich tracts occupy residues 614–624 and 813–835; these read TEGHSTLNTMF and QSRISTSSTPVIPNSIVSSYNQT. Residues 836-848 are compositionally biased toward low complexity; that stretch reads SSEAGGSGPSSSI. A PWWP domain is found at 1385-1409; the sequence is VGDLVWGQIKGLTSWPGKLVREDDV. The disordered stretch occupies residues 1468 to 1494; it reads MSGTVHQIPQGDRQMRPPKPKRRKISR. Positions 1483-1494 are enriched in basic residues; it reads RPPKPKRRKISR.

In terms of assembly, core component of the polycomb repressive deubiquitinase (PR-DUB) complex, at least composed of BAP1, one of ASXL1, ASXL2 or (probably) ASXL3, and one of MBD5 or MBD6. Distinct combinations of ASXL and MBD proteins may preferentially bind specific histone modification marks. The PR-DUB core associates with a number of accessory proteins, including FOXK1, FOXK2, KDM1B, HCFC1 and OGT; KDM1B specifically associates with ASXL2 PR-DUB complexes. Interacts (via MBD domain) with ASXL1, ASXL2 and ASXL3 (via PHD domain); the interaction is probably direct, mediates association with other PR-DUB complex core components. As to expression, detected in heart, placenta, liver, skeletal muscle, kidney and pancreas.

The protein resides in the nucleus. It is found in the chromosome. Functionally, non-catalytic component of the polycomb repressive deubiquitinase (PR-DUB) complex, a complex that specifically mediates deubiquitination of histone H2A monoubiquitinated at 'Lys-120' (H2AK119ub1). Important for stability of PR-DUB components and stimulating its ubiquitinase activity. As part of the PR-DUB complex, associates with chromatin enriched in histone marks H3K4me1, H3K4me3, and H3K27Ac, but not in H3K27me3. The PR-DUB complex is an epigenetic regulator of gene expression, including genes involved in cell growth and survivability. MBD5 and MBD6 containing complexes associate with distinct chromatin regions enriched in genes involved in different pathways. Heterochromatin recruitment is not mediated by DNA methylation. The PR-DUB complex is an epigenetic regulator of gene expression, including genes involved in development, cell communication, signaling, cell proliferation and cell viability. The chain is Methyl-CpG-binding domain protein 5 (MBD5) from Homo sapiens (Human).